The sequence spans 154 residues: Urease accessory protein UreE (154 aa).

This sequence belongs to the UreE family.

It localises to the cytoplasm. Functionally, involved in urease metallocenter assembly. Binds nickel. Probably functions as a nickel donor during metallocenter assembly. In Rhizobium meliloti (strain 1021) (Ensifer meliloti), this protein is Urease accessory protein UreE.